The chain runs to 132 residues: Hydrogenase maturation factor HypA (132 aa).

His-2 lines the Ni(2+) pocket. Cys-74, Cys-77, Cys-91, and Cys-94 together coordinate Zn(2+).

This sequence belongs to the HypA/HybF family.

Involved in the maturation of [NiFe] hydrogenases. Required for nickel insertion into the metal center of the hydrogenase. The chain is Hydrogenase maturation factor HypA from Synechococcus sp. (strain JA-2-3B'a(2-13)) (Cyanobacteria bacterium Yellowstone B-Prime).